A 387-amino-acid chain; its full sequence is Succinate--CoA ligase [ADP-forming] subunit beta (387 aa).

The 228-residue stretch at 9–236 (RDLFESYGVP…AAAADPLEAK (228 aa)) folds into the ATP-grasp domain. ATP is bound by residues Lys-45, 52-54 (GRG), Ala-94, and Glu-99. Positions 191 and 205 each coordinate Mg(2+). Substrate is bound by residues Asn-256 and 318–320 (GIT).

The protein belongs to the succinate/malate CoA ligase beta subunit family. As to quaternary structure, heterotetramer of two alpha and two beta subunits. Requires Mg(2+) as cofactor.

It carries out the reaction succinate + ATP + CoA = succinyl-CoA + ADP + phosphate. It catalyses the reaction GTP + succinate + CoA = succinyl-CoA + GDP + phosphate. It functions in the pathway carbohydrate metabolism; tricarboxylic acid cycle; succinate from succinyl-CoA (ligase route): step 1/1. Its function is as follows. Succinyl-CoA synthetase functions in the citric acid cycle (TCA), coupling the hydrolysis of succinyl-CoA to the synthesis of either ATP or GTP and thus represents the only step of substrate-level phosphorylation in the TCA. The beta subunit provides nucleotide specificity of the enzyme and binds the substrate succinate, while the binding sites for coenzyme A and phosphate are found in the alpha subunit. The chain is Succinate--CoA ligase [ADP-forming] subunit beta from Clavibacter michiganensis subsp. michiganensis (strain NCPPB 382).